A 234-amino-acid chain; its full sequence is Sugar fermentation stimulation protein A (234 aa).

A DNA-binding region (H-T-H motif) is located at residues 201-220 (LLTEAQQRGVEILAYKAEIS).

This sequence belongs to the SfsA family.

Binds to DNA non-specifically. Could be a regulatory factor involved in maltose metabolism. This Escherichia fergusonii (strain ATCC 35469 / DSM 13698 / CCUG 18766 / IAM 14443 / JCM 21226 / LMG 7866 / NBRC 102419 / NCTC 12128 / CDC 0568-73) protein is Sugar fermentation stimulation protein A.